The chain runs to 583 residues: Mitogen-activated protein kinase 4 (583 aa).

In terms of domain architecture, Protein kinase spans phenylalanine 20–methionine 312. ATP-binding positions include leucine 26–valine 34 and lysine 49. Catalysis depends on aspartate 149, which acts as the Proton acceptor. Residue serine 186 is modified to Phosphoserine; by PAK1, PAK2 and PAK3. The SEG motif signature appears at serine 186–glycine 188. The short motif at phenylalanine 328–glutamate 333 is the FRIEDE motif element. Composition is skewed to basic and acidic residues over residues aspartate 366–arginine 379 and valine 391–serine 410. Residues aspartate 366–serine 410 are disordered. Serine 430 bears the Phosphoserine mark. The tract at residues serine 495–proline 531 is disordered.

The protein belongs to the protein kinase superfamily. CMGC Ser/Thr protein kinase family. MAP kinase subfamily. Homodimer. Heterodimer with ERK3/MAPK6. Interacts with (via FRIEDE motif) MAPKAPK5. It depends on Mg(2+) as a cofactor. In terms of processing, phosphorylated at Ser-186 by PAK1, PAK2 and PAK3 resulting in catalytic activation. Phosphorylated by MAPKAPK5 at other sites.

It is found in the cytoplasm. It localises to the nucleus. The catalysed reaction is L-seryl-[protein] + ATP = O-phospho-L-seryl-[protein] + ADP + H(+). The enzyme catalyses L-threonyl-[protein] + ATP = O-phospho-L-threonyl-[protein] + ADP + H(+). Activated by phosphorylation at Ser-186. In terms of biological role, atypical MAPK protein. Phosphorylates microtubule-associated protein 2 (MAP2) and MAPKAPK5. The precise role of the complex formed with MAPKAPK5 is still unclear, but the complex follows a complex set of phosphorylation events: upon interaction with atypical MAPKAPK5, ERK4/MAPK4 is phosphorylated at Ser-186 and then mediates phosphorylation and activation of MAPKAPK5, which in turn phosphorylates ERK4/MAPK4. May promote entry in the cell cycle. This Mus musculus (Mouse) protein is Mitogen-activated protein kinase 4 (Mapk4).